Here is a 319-residue protein sequence, read N- to C-terminus: uncharacterized protein (319 aa).

9 helical membrane passes run 11 to 31 (GLWAGFIAFVIAMLALDLGVF), 43 to 63 (ALGWSALWVSLALVFGAGVWW), 83 to 103 (LSVDNIFVFVVIFSALRIPAL), 108 to 128 (VLFWGILSALALRAIMIFAGV), 134 to 154 (FHWLIYVFGGFLIITGVKLFL), 195 to 215 (LATPLLMALLLVEASDILFAL), 220 to 240 (AIFAVTTDPFIVFTSNIFAIL), 260 to 280 (KVGLSAVLVFVGTKMAIIDFV), and 284 to 304 (PEVSLSVIAGLLGASIVASLI).

This sequence belongs to the TerC family.

The protein localises to the cell membrane. This is an uncharacterized protein from Myxococcus xanthus.